The primary structure comprises 160 residues: Crossover junction endodeoxyribonuclease RuvC (160 aa).

Residues Asp-7, Glu-67, and Asp-138 contribute to the active site. Positions 7, 67, and 138 each coordinate Mg(2+).

Belongs to the RuvC family. In terms of assembly, homodimer which binds Holliday junction (HJ) DNA. The HJ becomes 2-fold symmetrical on binding to RuvC with unstacked arms; it has a different conformation from HJ DNA in complex with RuvA. In the full resolvosome a probable DNA-RuvA(4)-RuvB(12)-RuvC(2) complex forms which resolves the HJ. It depends on Mg(2+) as a cofactor.

It localises to the cytoplasm. It carries out the reaction Endonucleolytic cleavage at a junction such as a reciprocal single-stranded crossover between two homologous DNA duplexes (Holliday junction).. Functionally, the RuvA-RuvB-RuvC complex processes Holliday junction (HJ) DNA during genetic recombination and DNA repair. Endonuclease that resolves HJ intermediates. Cleaves cruciform DNA by making single-stranded nicks across the HJ at symmetrical positions within the homologous arms, yielding a 5'-phosphate and a 3'-hydroxyl group; requires a central core of homology in the junction. The consensus cleavage sequence is 5'-(A/T)TT(C/G)-3'. Cleavage occurs on the 3'-side of the TT dinucleotide at the point of strand exchange. HJ branch migration catalyzed by RuvA-RuvB allows RuvC to scan DNA until it finds its consensus sequence, where it cleaves and resolves the cruciform DNA. The protein is Crossover junction endodeoxyribonuclease RuvC of Brachyspira hyodysenteriae (strain ATCC 49526 / WA1).